The primary structure comprises 410 residues: Tryptophan synthase beta chain (410 aa).

N6-(pyridoxal phosphate)lysine is present on lysine 98.

Belongs to the TrpB family. Tetramer of two alpha and two beta chains. It depends on pyridoxal 5'-phosphate as a cofactor.

The catalysed reaction is (1S,2R)-1-C-(indol-3-yl)glycerol 3-phosphate + L-serine = D-glyceraldehyde 3-phosphate + L-tryptophan + H2O. It functions in the pathway amino-acid biosynthesis; L-tryptophan biosynthesis; L-tryptophan from chorismate: step 5/5. In terms of biological role, the beta subunit is responsible for the synthesis of L-tryptophan from indole and L-serine. In Dinoroseobacter shibae (strain DSM 16493 / NCIMB 14021 / DFL 12), this protein is Tryptophan synthase beta chain.